A 292-amino-acid polypeptide reads, in one-letter code: G1/S-specific cyclin-D3 (292 aa).

Residues 27–152 (VLQSLLRLEE…LVLGKLKWDL (126 aa)) enclose the Cyclin N-terminal domain. The segment at 256-292 (REAAQTAPSPVPKAPRGSSSQGPSQTSTPTDVTAIHL) is disordered. A phosphoserine mark is found at Ser264 and Ser279. The span at 272–285 (GSSSQGPSQTSTPT) shows a compositional bias: low complexity. Position 283 is a phosphothreonine (Thr283).

Belongs to the cyclin family. Cyclin D subfamily. As to quaternary structure, interacts with the CDK4 and CDK6 protein kinases to form a serine/threonine kinase holoenzyme complex. The cyclin subunit imparts substrate specificity to the complex. Interacts with ATF5. Interacts with EIF3K. Component of the ternary complex cyclin D/CDK4/CDKN1B required for nuclear translocation and modulation of CDK4-mediated kinase activity. Can form similar complexes with either CDKN1A or CDKN2A. In terms of processing, phosphorylation at Thr-283 by MAP kinases is required for ubiquitination and degradation by the DCX(AMBRA1) complex. Post-translationally, ubiquitinated by the DCX(AMBRA1) complex during the transition from G1 to S cell phase, leading to its degradation: ubiquitination is dependent on Thr-283 phosphorylation. The DCX(AMBRA1) complex represents the major regulator of CCND3 stability during the G1/S transition. Polyubiquitinated by the SCF(FBXL2) complex, leading to proteasomal degradation.

The protein localises to the nucleus. Its subcellular location is the cytoplasm. In terms of biological role, regulatory component of the cyclin D3-CDK4 (DC) complex that phosphorylates and inhibits members of the retinoblastoma (RB) protein family including RB1 and regulates the cell-cycle during G(1)/S transition. Phosphorylation of RB1 allows dissociation of the transcription factor E2F from the RB/E2F complex and the subsequent transcription of E2F target genes which are responsible for the progression through the G(1) phase. Hypophosphorylates RB1 in early G(1) phase. Cyclin D-CDK4 complexes are major integrators of various mitogenenic and antimitogenic signals. Component of the ternary complex, cyclin D3/CDK4/CDKN1B, required for nuclear translocation and activity of the cyclin D-CDK4 complex. Shows transcriptional coactivator activity with ATF5 independently of CDK4. The polypeptide is G1/S-specific cyclin-D3 (Mus musculus (Mouse)).